The primary structure comprises 467 residues: 3-isopropylmalate dehydratase large subunit (467 aa).

[4Fe-4S] cluster-binding residues include C347, C407, and C410.

The protein belongs to the aconitase/IPM isomerase family. LeuC type 1 subfamily. Heterodimer of LeuC and LeuD. [4Fe-4S] cluster serves as cofactor.

The catalysed reaction is (2R,3S)-3-isopropylmalate = (2S)-2-isopropylmalate. The protein operates within amino-acid biosynthesis; L-leucine biosynthesis; L-leucine from 3-methyl-2-oxobutanoate: step 2/4. Catalyzes the isomerization between 2-isopropylmalate and 3-isopropylmalate, via the formation of 2-isopropylmaleate. This Crocosphaera subtropica (strain ATCC 51142 / BH68) (Cyanothece sp. (strain ATCC 51142)) protein is 3-isopropylmalate dehydratase large subunit.